A 312-amino-acid chain; its full sequence is MLCRLPGPSTSRGEKEMGNSMKSTPAPLERPLSNTEGLESDFLAVLNDYPSPDISPPIFRRGEKLRVISDEGGWWKAISLSTGRESYIPGICVARVYHGWLFEGLGRDKAEELLQLPDTKIGSFMIRESETKKGFYSLSVRHRQVKHYRIFRLPNNWYYISPRLTFQCLEDLVTHYSEVADGLCCVLTTPCLAQNTPAPTAQPSPCTSPGSPVTLRQKTFDWKRVSSLQEGPEGAENPLRVDESLFSYGLRESIASYLSLTGDDSSNFDRKKKSLSLIYSGSKRKSSFFSAPNTLKINALAGTQKTKALTAT.

The segment at 1–33 (MLCRLPGPSTSRGEKEMGNSMKSTPAPLERPLS) is disordered. The SH3 domain maps to 38–98 (LESDFLAVLN…PGICVARVYH (61 aa)). The SH2 domain maps to 100 to 191 (WLFEGLGRDK…GLCCVLTTPC (92 aa)). Residues 206 to 312 (CTSPGSPVTL…TQKTKALTAT (107 aa)) are SLA C-terminal. The residue at position 274 (S274) is a Phosphoserine.

In terms of assembly, homodimer. Interacts with phosphorylated CBL, SYK and LAT. Homodimerization and interaction with phosphorylated CBL occurs via its C-terminal domain. Interacts with PDGFRB and EPHA2. Interacts with phosphorylated proteins ZAP70; CD3Z; VAV1 and LCP2 via its SH2 domain. Phosphorylated.

The protein localises to the cytoplasm. The protein resides in the endosome. Functionally, adapter protein, which negatively regulates T-cell receptor (TCR) signaling. Inhibits T-cell antigen-receptor induced activation of nuclear factor of activated T-cells. Involved in the negative regulation of positive selection and mitosis of T-cells. May act by linking signaling proteins such as ZAP70 with CBL, leading to a CBL dependent degradation of signaling proteins. This Rattus norvegicus (Rat) protein is Src-like-adapter (Sla).